Consider the following 233-residue polypeptide: Small ribosomal subunit protein eS4 (233 aa).

An S4 RNA-binding domain is found at 37-99; that stretch reads VPLVVVLRDV…RDEYYRVFPD (63 aa).

The protein belongs to the eukaryotic ribosomal protein eS4 family.

In Halobacterium salinarum (strain ATCC 29341 / DSM 671 / R1), this protein is Small ribosomal subunit protein eS4.